Reading from the N-terminus, the 222-residue chain is Glutathione S-transferase A4 (222 aa).

Methionine 1 is modified (N-acetylmethionine). Residues 3–83 (TKPKLHYPNG…YIADKHHLFG (81 aa)) form the GST N-terminal domain. Residues tyrosine 9, 54-55 (QV), and 67-68 (QT) each bind glutathione. One can recognise a GST C-terminal domain in the interval 85-208 (DLKERTLIDM…EPGSKKKPPP (124 aa)).

It belongs to the GST superfamily. Alpha family. In terms of assembly, homodimer.

It is found in the cytoplasm. It carries out the reaction RX + glutathione = an S-substituted glutathione + a halide anion + H(+). Conjugation of reduced glutathione to a wide number of exogenous and endogenous hydrophobic electrophiles. In Bos taurus (Bovine), this protein is Glutathione S-transferase A4 (GSTA4).